The chain runs to 308 residues: Membrane protein insertase YidC 1 (308 aa).

A signal peptide spans methionine 1–glycine 22. The N-palmitoyl cysteine moiety is linked to residue cysteine 23. A lipid anchor (S-diacylglycerol cysteine) is attached at cysteine 23. The next 5 helical transmembrane spans lie at phenylalanine 60–isoleucine 80, phenylalanine 135–phenylalanine 155, tyrosine 168–tyrosine 188, methionine 211–phenylalanine 225, and valine 230–valine 252. The disordered stretch occupies residues glutamate 263 to arginine 308. Residues serine 269–serine 278 are compositionally biased toward polar residues. Over residues serine 293 to arginine 308 the composition is skewed to basic residues.

Belongs to the OXA1/ALB3/YidC family. Type 2 subfamily.

The protein resides in the cell membrane. Functionally, required for the insertion and/or proper folding and/or complex formation of integral membrane proteins into the membrane. Involved in integration of membrane proteins that insert both dependently and independently of the Sec translocase complex, as well as at least some lipoproteins. The protein is Membrane protein insertase YidC 1 of Streptococcus pneumoniae (strain ATCC BAA-255 / R6).